The sequence spans 329 residues: uncharacterized protein (329 aa).

9 helical membrane-spanning segments follow: residues 5–24 (NLLLLILLHIGAFLFPFLTV), 34–56 (IAVALALLAVVLMSEALSIYLIF), 92–114 (FGYIIIGFPAAGLMLCGAVLEWG), 124–146 (IIFFAFIVPLLQLCLFPLVVLFY), 159–181 (SANFSVFWAKLSIAGLVLVLLSL), 196–218 (TAHRTAFILAPLFNIFVGALQYL), 231–253 (FSIVLFASPLLSFALLLELLGAY), 263–285 (LIGVSVIFLAMFAATWVVLRLFG), and 306–328 (FWLFWVNAAIVGIGIFFVIRILT).

Its subcellular location is the cell membrane. This is an uncharacterized protein from Archaeoglobus fulgidus (strain ATCC 49558 / DSM 4304 / JCM 9628 / NBRC 100126 / VC-16).